A 151-amino-acid polypeptide reads, in one-letter code: Mitochondrial intermembrane space import and assembly protein 40 homolog (151 aa).

Positions 1–35 are disordered; the sequence is MGQGLSQPAQAVEEPSPPAVEAAPSSSPSPAPAPS. Low complexity predominate over residues 7 to 26; that stretch reads QPAQAVEEPSPPAVEAAPSS. 3 disulfides stabilise this stretch: C65-C67, C76-C109, and C86-C99. The 45-residue stretch at 73 to 117 folds into the CHCH domain; the sequence is NGPCGSQFVDAFSCFLKSTEEEKGSDCVKPFIALQDCIKINPEAF. 2 consecutive short sequence motifs (cx9C motif) follow at residues 76 to 86 and 99 to 109; these read CGSQFVDAFSC and CVKPFIALQDC. Residues 123–151 are disordered; the sequence is EEEENDEEAEKSNLKVRAPAWSRESKPKL.

It is found in the mitochondrion intermembrane space. It localises to the peroxisome matrix. Its function is as follows. Required for the import and folding of small cysteine-containing proteins in the mitochondrial intermembrane space. This Oryza sativa subsp. japonica (Rice) protein is Mitochondrial intermembrane space import and assembly protein 40 homolog.